The following is a 408-amino-acid chain: Argininosuccinate synthase (408 aa).

Residues 11-19 and Ala38 contribute to the ATP site; that span reads AYSGGLDTS. Positions 91 and 96 each coordinate L-citrulline. Gly121 provides a ligand contact to ATP. Positions 123, 127, and 128 each coordinate L-aspartate. Asn127 contributes to the L-citrulline binding site. Positions 131, 182, 191, 267, and 279 each coordinate L-citrulline.

This sequence belongs to the argininosuccinate synthase family. Type 1 subfamily. In terms of assembly, homotetramer.

The protein resides in the cytoplasm. The enzyme catalyses L-citrulline + L-aspartate + ATP = 2-(N(omega)-L-arginino)succinate + AMP + diphosphate + H(+). Its pathway is amino-acid biosynthesis; L-arginine biosynthesis; L-arginine from L-ornithine and carbamoyl phosphate: step 2/3. The sequence is that of Argininosuccinate synthase from Azorhizobium caulinodans (strain ATCC 43989 / DSM 5975 / JCM 20966 / LMG 6465 / NBRC 14845 / NCIMB 13405 / ORS 571).